A 469-amino-acid chain; its full sequence is Glutamine synthetase (469 aa).

The region spanning 13-97 is the GS beta-grasp domain; the sequence is HEVKFVDLRF…IRCDILEPGT (85 aa). A GS catalytic domain is found at 105-469; sequence PRSIAKRAED…PVEFELYYSV (365 aa). Mg(2+) is bound by residues Glu-130 and Glu-132. Glu-208 serves as a coordination point for ATP. Glu-213 and Glu-221 together coordinate Mg(2+). L-glutamate contacts are provided by residues 265–266 and Gly-266; that span reads NG. Position 270 (His-270) interacts with Mg(2+). ATP is bound by residues 272–274 and Ser-274; that span reads HMS. The L-glutamate site is built by Arg-322, Glu-328, and Arg-340. The ATP site is built by Arg-340, Arg-345, and Lys-353. Mg(2+) is bound at residue Glu-358. Residue Arg-360 coordinates L-glutamate. An O-AMP-tyrosine modification is found at Tyr-398.

This sequence belongs to the glutamine synthetase family. In terms of assembly, oligomer of 12 subunits arranged in the form of two hexagons. Mn(2+) serves as cofactor.

It localises to the cytoplasm. The catalysed reaction is L-glutamate + NH4(+) + ATP = L-glutamine + ADP + phosphate + H(+). Its activity is regulated as follows. When cellular nitrogen levels are high, the C-terminal adenylyl transferase (AT) of GlnE inhibits GlnA by covalent transfer of an adenylyl group from ATP to Tyr-398. Conversely, when nitrogen levels are low, the N-terminal adenylyl removase (AR) of GlnE activates GlnA by removing the adenylyl group by phosphorolysis. The fully adenylated enzyme complex is inactive. Functionally, catalyzes the ATP-dependent biosynthesis of glutamine from glutamate and ammonia. This is Glutamine synthetase from Salmonella typhi.